A 189-amino-acid polypeptide reads, in one-letter code: UPF0301 protein RrIowa_0061 (189 aa).

It belongs to the UPF0301 (AlgH) family.

The sequence is that of UPF0301 protein RrIowa_0061 from Rickettsia rickettsii (strain Iowa).